Reading from the N-terminus, the 1109-residue chain is Hybrid signal transduction histidine kinase F (1109 aa).

Residues 237–289 (LSTETTITKKNGEKYPAEVFVKEISDIHSNSIGIMIIVRDITDQIRLKEMNIE) enclose the PAC domain. Positions 324 to 547 (TISHEIRTPL…LFSVTLNFEQ (224 aa)) constitute a Histidine kinase domain. H327 carries the phosphohistidine; by autocatalysis modification. A coiled-coil region spans residues 719 to 760 (SNLIQTISQIDNQQQQQQQQLQQQEQEQQHQQQQLQQEQQFV). Residues 739-758 (LQQQEQEQQHQQQQLQQEQQ) show a composition bias toward low complexity. The interval 739-819 (LQQQEQEQQH…TSSDSGESDE (81 aa)) is disordered. Residues 767–782 (DSSEKKTTPKKDRGKY) are compositionally biased toward basic and acidic residues. A Response regulatory domain is found at 928 to 1048 (RILLVDDNAV…PLGELVKKYL (121 aa)). 4-aspartylphosphate is present on D977. The span at 1052 to 1099 (NNNNNNNNNNNNNNNNNSNNNNSNSNSNPNSNSNSNSNSNSNPNQNPN) shows a compositional bias: low complexity. Positions 1052-1109 (NNNNNNNNNNNNNNNNNSNNNNSNSNSNPNSNSNSNSNSNSNPNQNPNYCNNLPTDFI) are disordered. Residues 1100–1109 (YCNNLPTDFI) are compositionally biased toward polar residues.

It catalyses the reaction ATP + protein L-histidine = ADP + protein N-phospho-L-histidine.. Functionally, acts as a receptor histidine kinase for a signal transduction pathway. This protein undergoes an ATP-dependent autophosphorylation at a conserved histidine residue in the kinase core, and a phosphoryl group is then transferred to a conserved aspartate residue in the receiver domain. The chain is Hybrid signal transduction histidine kinase F (dhkF) from Dictyostelium discoideum (Social amoeba).